The primary structure comprises 77 residues: Dermaseptin-B9 (77 aa).

The signal sequence occupies residues 1–22 (MAFLKKSLFLVLFLGLVSLSVC). 2 consecutive propeptides follow at residues 23–43 (EEEKRENEDEEEQEDDEQSEE) and 76–77 (EQ).

The protein belongs to the frog skin active peptide (FSAP) family. Dermaseptin subfamily. As to expression, expressed by the skin glands.

Its subcellular location is the secreted. Has antimicrobial activity. Exhibits a bactericidal activity towards several species of mollicutes, firmicutes and gracilicutes. This peptide is membranotropic and it efficiently depolarizes the plasma membrane. The sequence is that of Dermaseptin-B9 (DRG3) from Phyllomedusa bicolor (Two-colored leaf frog).